The following is a 691-amino-acid chain: Two-component response regulator ORR21 (691 aa).

One can recognise a Response regulatory domain in the interval 17-132; sequence KVLVVDDDPT…ELKNIWQHVI (116 aa). D68 bears the 4-aspartylphosphate mark. Basic and acidic residues predominate over residues 139 to 155; that stretch reads NKEHEHSGSLDDTDRTR. Disordered regions lie at residues 139-204 and 616-647; these read NKEH…KKPR and SHPG…HGFV. A DNA-binding region (myb-like GARP) is located at residues 199 to 258; the sequence is TSKKPRVVWSVELHQQFVNAVNHLGIDKAVPKKILELMNVPGLTRENVASHLQKFRLYLK. Positions 616 to 628 are enriched in low complexity; that stretch reads SHPGSSSSSFQSS.

The protein belongs to the ARR family. Type-B subfamily. In terms of processing, two-component system major event consists of a His-to-Asp phosphorelay between a sensor histidine kinase (HK) and a response regulator (RR). In plants, the His-to-Asp phosphorelay involves an additional intermediate named Histidine-containing phosphotransfer protein (HPt). This multistep phosphorelay consists of a His-Asp-His-Asp sequential transfer of a phosphate group between first a His and an Asp of the HK protein, followed by the transfer to a conserved His of the HPt protein and finally the transfer to an Asp in the receiver domain of the RR protein.

It is found in the nucleus. Transcriptional activator that binds specific DNA sequence. Functions as a response regulator involved in His-to-Asp phosphorelay signal transduction system. Phosphorylation of the Asp residue in the receiver domain activates the ability of the protein to promote the transcription of target genes. May directly activate some type-A response regulators in response to cytokinins. The sequence is that of Two-component response regulator ORR21 from Oryza sativa subsp. indica (Rice).